We begin with the raw amino-acid sequence, 166 residues long: RNA polymerase sigma factor SigV (166 aa).

The Polymerase core binding motif lies at 38–51 (DIVQESIKKALSSV). The segment at residues 131-150 (LEEIAEITGENTNTVKTRLY) is a DNA-binding region (H-T-H motif).

Belongs to the sigma-70 factor family. ECF subfamily. As to quaternary structure, interacts with RsiV.

Sigma factors are initiation factors that promote the attachment of RNA polymerase to specific initiation sites and are then released. Positively regulates the expression of proteins involved in stress responses against bacitracin, paraquat and tellurite. The sequence is that of RNA polymerase sigma factor SigV (sigV) from Bacillus subtilis (strain 168).